A 1120-amino-acid chain; its full sequence is Terminal uridylyltransferase 1 (1120 aa).

Disordered stretches follow at residues 1-156 and 196-221; these read MSKY…SAVE and AALINGDPGPLSSAVSSSSSGSPHTP. A compositionally biased stretch (polar residues) spans 7–16; that stretch reads LFNQGTKDGT. Positions 17–59 are enriched in low complexity; it reads NASSGSEANSANITSSSAPASSTNTSSPTSSESAVVSPPASTS. Residues 60–70 show a composition bias toward basic residues; it reads PRRRLIHRRHG. Over residues 90–103 the composition is skewed to basic and acidic residues; that stretch reads NEEKHENFISDSVH. Polar residues predominate over residues 118-128; that stretch reads LTTSGSETVMS. Composition is skewed to low complexity over residues 134-154 and 207-217; these read AFEAPSPPTASASPPLESTSA and SSAVSSSSSGS. Residues 222 to 253 form a C2H2-type; atypical zinc finger; the sequence is PRLFTCDMCLQYVSTSYEALEQHALDQHGDAL. Zn(2+) is bound by residues cysteine 227, cysteine 230, histidine 244, and histidine 249. UTP is bound by residues serine 330 and 341 to 344; that span reads SDID. The Mg(2+) site is built by aspartate 342 and aspartate 344. Arginine 390 provides a ligand contact to RNA. A Mg(2+)-binding site is contributed by aspartate 548. UTP contacts are provided by residues 555–559, lysine 580, lysine 584, and 598–599; these read GIRNS and SY. Positions 659–697 constitute a PAP-associated domain; sequence GELLLGFFYYYAFEFDWVNHVVSLNRPGITTKASLGWDV. Positions 750–1120 are important for catalytic activity and RNA binding; that stretch reads GMMASSASAA…ARRVLRLLFR (371 aa). A Nucleotide recognition motif (NRM) motif is present at residues 773-782; that stretch reads IEDPYEENLN. The tract at residues 800 to 900 is involved in oligomerization; it reads YRGLLSLLKD…LLSDLEAAFL (101 aa). The disordered stretch occupies residues 1047 to 1076; the sequence is PSTTTQGEDPLASGTCEQGGVSPSLPTGAP.

This sequence belongs to the DNA polymerase type-B-like family. In terms of assembly, homotetramer. Part of a 700kDa complex. Interacts with p45 and p50 RNA ligases. The cofactor is Mg(2+). Mn(2+) serves as cofactor.

It is found in the mitochondrion. It catalyses the reaction RNA(n) + UTP = RNA(n)-3'-uridine ribonucleotide + diphosphate. Zinc-binding is required for catalytic activity. Its function is as follows. Terminal uridylyltransferase which is involved in the post-transcriptional editing of mitochondrial RNA, a process involving the addition and deletion of uridine (U) nucleotides in the pre-mRNA. Specifically, catalyzes the addition of Us to the 3'-hydroxyl group of guided RNA (gRNA), with a preference for RNAs terminating in 6 Us, but also can add Us to RNAs terminating in 6 adenines (A), 6 cytosines (C), or 6 guanines (G). Can mediate RNA-independent UTP polymerization in vitro. Can mediate pyrophosphate-dependent degradation of synthetic RNA ending with U residues in vitro. The chain is Terminal uridylyltransferase 1 from Leishmania tarentolae (Sauroleishmania tarentolae).